A 1923-amino-acid chain; its full sequence is GREB1-like protein (1923 aa).

The span at Glu-87–Ser-96 shows a compositional bias: acidic residues. Disordered regions lie at residues Glu-87–Pro-111, Ser-246–Lys-326, and Arg-1101–Arg-1222. Low complexity predominate over residues Pro-252–Pro-262. Polar residues-rich tracts occupy residues Glu-263–Asp-278, Thr-296–Pro-307, and Pro-1119–Thr-1161. The segment covering Ser-1195 to Ser-1206 has biased composition (low complexity). A helical transmembrane segment spans residues Gly-1843 to Leu-1862.

Belongs to the GREB1 family. In terms of tissue distribution, widely expressed, with prominent expression in the cochlea. Expressed at high levels in fetal kidney. In adult tissues, highest levels in vagina, cervix and epididymis.

It is found in the membrane. Functionally, plays a major role in early metanephros and genital development. The chain is GREB1-like protein (GREB1L) from Homo sapiens (Human).